The sequence spans 347 residues: Protein RecA (347 aa).

Gly-65–Thr-72 is an ATP binding site. Basic and acidic residues predominate over residues Lys-327–Glu-336. The segment at Lys-327–Met-347 is disordered. Over residues Glu-337 to Met-347 the composition is skewed to acidic residues.

The protein belongs to the RecA family.

It is found in the cytoplasm. Functionally, can catalyze the hydrolysis of ATP in the presence of single-stranded DNA, the ATP-dependent uptake of single-stranded DNA by duplex DNA, and the ATP-dependent hybridization of homologous single-stranded DNAs. It interacts with LexA causing its activation and leading to its autocatalytic cleavage. This Xylella fastidiosa (strain M23) protein is Protein RecA.